An 84-amino-acid polypeptide reads, in one-letter code: Small ribosomal subunit protein bS16 (84 aa).

Belongs to the bacterial ribosomal protein bS16 family.

The sequence is that of Small ribosomal subunit protein bS16 from Burkholderia ambifaria (strain MC40-6).